Here is a 190-residue protein sequence, read N- to C-terminus: Translation initiation factor IF-3 (190 aa).

Residues 159 to 190 are disordered; that stretch reads QSEVQQKPKREGRNMIMFLSPRKSPLIKKDNE.

This sequence belongs to the IF-3 family. In terms of assembly, monomer.

The protein localises to the cytoplasm. Functionally, IF-3 binds to the 30S ribosomal subunit and shifts the equilibrium between 70S ribosomes and their 50S and 30S subunits in favor of the free subunits, thus enhancing the availability of 30S subunits on which protein synthesis initiation begins. In Prochlorococcus marinus (strain MIT 9215), this protein is Translation initiation factor IF-3.